Reading from the N-terminus, the 344-residue chain is Eukaryotic translation initiation factor 2 subunit alpha (344 aa).

The region spanning Asp21–Arg92 is the S1 motif domain. Ser56 bears the Phosphoserine; by GCN2 mark. The disordered stretch occupies residues Leu309–Glu344. Over residues Glu314–Ile336 the composition is skewed to acidic residues. Phosphoserine; by CK2 occurs at positions 317 and 322.

It belongs to the eIF-2-alpha family. Eukaryotic translation initiation factor 2 eIF2 is a heterotrimeric complex composed of an alpha, a beta and a gamma subunit. Phosphorylated at Ser-56 by GCN2. Phosphorylated at Ser-317 and Ser-322 by CK2.

It is found in the cytoplasm. It localises to the cytosol. In terms of biological role, functions in the early steps of protein synthesis by forming a ternary complex with GTP and initiator tRNA. This complex binds to a 40S ribosomal subunit, followed by mRNA binding to form a 43S pre-initiation complex. Junction of the 60S ribosomal subunit to form the 80S initiation complex is preceded by hydrolysis of the GTP bound to eIF-2 and release of an eIF-2-GDP binary complex. In order for eIF-2 to recycle and catalyze another round of initiation, the GDP bound to eIF-2 must exchange with GTP by way of a reaction catalyzed by eIF2B. In Arabidopsis thaliana (Mouse-ear cress), this protein is Eukaryotic translation initiation factor 2 subunit alpha.